A 946-amino-acid chain; its full sequence is Bifunctional glutamine synthetase adenylyltransferase/adenylyl-removing enzyme (946 aa).

The tract at residues 1-440 (MKPLSSPLQQ…VFNELIGDDE (440 aa)) is adenylyl removase. The adenylyl transferase stretch occupies residues 449 to 946 (SEQWRELWQD…ASWQKWLVEE (498 aa)).

Belongs to the GlnE family. Mg(2+) serves as cofactor.

The enzyme catalyses [glutamine synthetase]-O(4)-(5'-adenylyl)-L-tyrosine + phosphate = [glutamine synthetase]-L-tyrosine + ADP. It catalyses the reaction [glutamine synthetase]-L-tyrosine + ATP = [glutamine synthetase]-O(4)-(5'-adenylyl)-L-tyrosine + diphosphate. Its function is as follows. Involved in the regulation of glutamine synthetase GlnA, a key enzyme in the process to assimilate ammonia. When cellular nitrogen levels are high, the C-terminal adenylyl transferase (AT) inactivates GlnA by covalent transfer of an adenylyl group from ATP to specific tyrosine residue of GlnA, thus reducing its activity. Conversely, when nitrogen levels are low, the N-terminal adenylyl removase (AR) activates GlnA by removing the adenylyl group by phosphorolysis, increasing its activity. The regulatory region of GlnE binds the signal transduction protein PII (GlnB) which indicates the nitrogen status of the cell. This is Bifunctional glutamine synthetase adenylyltransferase/adenylyl-removing enzyme from Escherichia coli (strain K12 / MC4100 / BW2952).